A 501-amino-acid chain; its full sequence is Aspartyl/glutamyl-tRNA(Asn/Gln) amidotransferase subunit B (501 aa).

It belongs to the GatB/GatE family. GatB subfamily. Heterotrimer of A, B and C subunits.

It carries out the reaction L-glutamyl-tRNA(Gln) + L-glutamine + ATP + H2O = L-glutaminyl-tRNA(Gln) + L-glutamate + ADP + phosphate + H(+). The enzyme catalyses L-aspartyl-tRNA(Asn) + L-glutamine + ATP + H2O = L-asparaginyl-tRNA(Asn) + L-glutamate + ADP + phosphate + 2 H(+). Allows the formation of correctly charged Asn-tRNA(Asn) or Gln-tRNA(Gln) through the transamidation of misacylated Asp-tRNA(Asn) or Glu-tRNA(Gln) in organisms which lack either or both of asparaginyl-tRNA or glutaminyl-tRNA synthetases. The reaction takes place in the presence of glutamine and ATP through an activated phospho-Asp-tRNA(Asn) or phospho-Glu-tRNA(Gln). This is Aspartyl/glutamyl-tRNA(Asn/Gln) amidotransferase subunit B from Mycobacterium sp. (strain KMS).